The sequence spans 471 residues: MTDLPDSTRWQLWIVAFGFFMQSLDTTIVNTALPSMAQSLGESPLHMHMVIVSYVLTVAVMLPASGWLADKVGVRNIFFTAIVLFTLGSLFCALSGTLNELLLARALQGVGGAMMVPVGRLTVMKIVPREQYMAAMTFVTLPGQVGPLLGPALGGLLVEYASWHWIFLINIPVGIIGAIATLMLMPNYTMQTRRFDLSGFLLLAVGMAVLTLALDGSKGTGLSPLTIDGLVAVGVVALVLYLLHARNNNRALFSLKLFRTRTFSLGLAGSFAGRIGSGMLPFMTPVFLQIGLGFSPFHAGLMMIPMVLGSMGMKRIVVQVVNRFGYRRVLVATTLGLSLVTLLFMTTALLGWYYVLPFVLFLQGMVNSTRFSSMNTLTLKDLPDNLASSGNSLLSMIMQLSMSIGVTIAGLLLGLFGSQHVSVDSGTTQTVFMYTWLSMAFIIALPAFIFARVPNDTHQNVAISRRKRSAQ.

The Periplasmic portion of the chain corresponds to 1–11 (MTDLPDSTRWQ). A helical membrane pass occupies residues 12 to 32 (LWIVAFGFFMQSLDTTIVNTA). Residues 33–48 (LPSMAQSLGESPLHMH) lie on the Cytoplasmic side of the membrane. A helical transmembrane segment spans residues 49-69 (MVIVSYVLTVAVMLPASGWLA). The Periplasmic portion of the chain corresponds to 70–76 (DKVGVRN). The chain crosses the membrane as a helical span at residues 77–97 (IFFTAIVLFTLGSLFCALSGT). Residues 98–101 (LNEL) are Cytoplasmic-facing. The helical transmembrane segment at 102–124 (LLARALQGVGGAMMVPVGRLTVM) threads the bilayer. The Periplasmic segment spans residues 125–137 (KIVPREQYMAAMT). Residues 138 to 158 (FVTLPGQVGPLLGPALGGLLV) form a helical membrane-spanning segment. Residues 159-164 (EYASWH) lie on the Cytoplasmic side of the membrane. A helical membrane pass occupies residues 165–185 (WIFLINIPVGIIGAIATLMLM). Topologically, residues 186–196 (PNYTMQTRRFD) are periplasmic. The chain crosses the membrane as a helical span at residues 197–217 (LSGFLLLAVGMAVLTLALDGS). Over 218–224 (KGTGLSP) the chain is Cytoplasmic. The chain crosses the membrane as a helical span at residues 225–245 (LTIDGLVAVGVVALVLYLLHA). The Periplasmic portion of the chain corresponds to 246 to 262 (RNNNRALFSLKLFRTRT). The helical transmembrane segment at 263–283 (FSLGLAGSFAGRIGSGMLPFM) threads the bilayer. At 284–285 (TP) the chain is on the cytoplasmic side. The chain crosses the membrane as a helical span at residues 286–306 (VFLQIGLGFSPFHAGLMMIPM). Topologically, residues 307–341 (VLGSMGMKRIVVQVVNRFGYRRVLVATTLGLSLVT) are periplasmic. The helical transmembrane segment at 342–362 (LLFMTTALLGWYYVLPFVLFL) threads the bilayer. Residues 363-395 (QGMVNSTRFSSMNTLTLKDLPDNLASSGNSLLS) lie on the Cytoplasmic side of the membrane. The chain crosses the membrane as a helical span at residues 396–416 (MIMQLSMSIGVTIAGLLLGLF). Topologically, residues 417–430 (GSQHVSVDSGTTQT) are periplasmic. Residues 431 to 451 (VFMYTWLSMAFIIALPAFIFA) form a helical membrane-spanning segment. Residues 452–471 (RVPNDTHQNVAISRRKRSAQ) lie on the Cytoplasmic side of the membrane.

This sequence belongs to the major facilitator superfamily. TCR/Tet family.

It is found in the cell inner membrane. In Escherichia coli O8 (strain IAI1), this protein is Putative multidrug resistance protein MdtD.